Here is a 145-residue protein sequence, read N- to C-terminus: LIM domain only protein 3 (145 aa).

2 consecutive LIM zinc-binding domains span residues Lys11–Val73 and Gly75–Lys137.

The chain is LIM domain only protein 3 from Danio rerio (Zebrafish).